The following is a 198-amino-acid chain: MAQLYFRYGTMNSGKSIEILKVAYNYEEQGKPVVLLTSRLDDRDEVGYISSRIGMRRKAYPIGNDTDIFDYIDDISPRPYCVLIDEAQFLTRANVYDLARIVDELDIPVMAFGLKNDFQNNLFEGSKYLLLLSDKIEEIKTICHYCSRKATMVLRMEDGEPVYEGVQVQIGGHESYISVCRKHWFNPPRERIVPLKQN.

ATP is bound by residues 9–16 (GTMNSGKS) and 85–88 (DEAQ). The active-site Proton acceptor is Glu-86. Zn(2+) is bound by residues Cys-143, Cys-146, Cys-180, and His-183.

This sequence belongs to the thymidine kinase family. Homotetramer.

The protein localises to the cytoplasm. It catalyses the reaction thymidine + ATP = dTMP + ADP + H(+). This Streptococcus thermophilus (strain ATCC BAA-250 / LMG 18311) protein is Thymidine kinase.